The following is a 433-amino-acid chain: Pyroglutamylated RF-amide peptide receptor (433 aa).

Residues 1-46 (MQALNITAEQFSRLLSAHNLTREQFIHRYGLRPLVYTPELPARAKL) lie on the Extracellular side of the membrane. N-linked (GlcNAc...) asparagine glycans are attached at residues N5 and N19. The chain crosses the membrane as a helical span at residues 47–67 (AFALAGALIFALALFGNSLVI). The Cytoplasmic segment spans residues 68 to 81 (YVVTRSKAMRTVTN). The chain crosses the membrane as a helical span at residues 82-102 (IFICSLALSDLLIAFFCIPVT). Residues 103 to 120 (MLQNISDKWLGGAFICKM) lie on the Extracellular side of the membrane. The chain crosses the membrane as a helical span at residues 121-141 (VPFVQSTAVVTEILTMTCIAV). At 142–162 (ERHQGLIHPFKMKWQYTTRRA) the chain is on the cytoplasmic side. The helical transmembrane segment at 163–183 (FTILGVVWLAAIIVGSPMWHV) threads the bilayer. Over 184–212 (QRLEIKYDFLYEKEHVCCLEEWASPMHQR) the chain is Extracellular. The helical transmembrane segment at 213–233 (IYTTFILVILFLLPLVVMLVL) threads the bilayer. The Cytoplasmic portion of the chain corresponds to 234-271 (YSKIGYELWIKKRVGDSSALQTIHGKEMSKIARKKKRA). A helical membrane pass occupies residues 272 to 292 (VVMMVTVVALFAACWAPFHVV). Topologically, residues 293 to 313 (HMMVEYSNFEKEYDDVTIKMV) are extracellular. The chain crosses the membrane as a helical span at residues 314–334 (FAVAQTIGFFNSICNPFVYAF). Topologically, residues 335–433 (MNENFKKNFL…NSTFGSGHEL (99 aa)) are cytoplasmic.

The protein belongs to the G-protein coupled receptor 1 family. As to expression, expressed widely in the brain with high levels in the cortex and hypothalamus, and moderate levels in the brain stem, caudate nucleus, midbrain hippocampus, thalamus, trigeminal ganglia and spinal cord. Particularly strong expression detected in the mitral cell layer of the olfactory bulb, accessory olfactory bulb, island of Calleja and nucleus of the solitary tract. In peripheral tissues, expressed at moderate levels in the eye, liver, kidney, pituitary gland, testis and thymus.

It localises to the cell membrane. Its function is as follows. Receptor for the orexigenic neuropeptide QRFP. The activity of this receptor is mediated by G proteins that modulate adenylate cyclase activity and intracellular calcium levels. This Mus musculus (Mouse) protein is Pyroglutamylated RF-amide peptide receptor (Qrfpr).